A 125-amino-acid polypeptide reads, in one-letter code: Phosphoribosyl-AMP cyclohydrolase (125 aa).

Position 74 (D74) interacts with Mg(2+). Residue C75 coordinates Zn(2+). Residues D76 and D78 each contribute to the Mg(2+) site. Zn(2+) is bound by residues C92 and C99.

It belongs to the PRA-CH family. In terms of assembly, homodimer. Mg(2+) serves as cofactor. The cofactor is Zn(2+).

It localises to the cytoplasm. The enzyme catalyses 1-(5-phospho-beta-D-ribosyl)-5'-AMP + H2O = 1-(5-phospho-beta-D-ribosyl)-5-[(5-phospho-beta-D-ribosylamino)methylideneamino]imidazole-4-carboxamide. It functions in the pathway amino-acid biosynthesis; L-histidine biosynthesis; L-histidine from 5-phospho-alpha-D-ribose 1-diphosphate: step 3/9. In terms of biological role, catalyzes the hydrolysis of the adenine ring of phosphoribosyl-AMP. This Geobacter sp. (strain M21) protein is Phosphoribosyl-AMP cyclohydrolase.